The chain runs to 286 residues: Shikimate dehydrogenase (NADP(+)) (286 aa).

Shikimate-binding positions include 19–21 (SFS) and Thr-66. Lys-70 serves as the catalytic Proton acceptor. Asn-91 and Asp-107 together coordinate shikimate. NADP(+) contacts are provided by residues 129–133 (GSGGA) and Leu-229. A shikimate-binding site is contributed by Tyr-231. Gly-252 serves as a coordination point for NADP(+).

Belongs to the shikimate dehydrogenase family. In terms of assembly, homodimer.

It catalyses the reaction shikimate + NADP(+) = 3-dehydroshikimate + NADPH + H(+). It participates in metabolic intermediate biosynthesis; chorismate biosynthesis; chorismate from D-erythrose 4-phosphate and phosphoenolpyruvate: step 4/7. Functionally, involved in the biosynthesis of the chorismate, which leads to the biosynthesis of aromatic amino acids. Catalyzes the reversible NADPH linked reduction of 3-dehydroshikimate (DHSA) to yield shikimate (SA). The polypeptide is Shikimate dehydrogenase (NADP(+)) (Prochlorococcus marinus (strain MIT 9301)).